A 900-amino-acid polypeptide reads, in one-letter code: Isoleucine--tRNA ligase (900 aa).

The 'HIGH' region motif lies at 58-68 (PYANGDLHTGH). E550 provides a ligand contact to L-isoleucyl-5'-AMP. Positions 591 to 595 (KMSKS) match the 'KMSKS' region motif. Residue K594 participates in ATP binding. 4 residues coordinate Zn(2+): C871, C874, C888, and C891.

Belongs to the class-I aminoacyl-tRNA synthetase family. IleS type 1 subfamily. As to quaternary structure, monomer. It depends on Zn(2+) as a cofactor.

It localises to the cytoplasm. It carries out the reaction tRNA(Ile) + L-isoleucine + ATP = L-isoleucyl-tRNA(Ile) + AMP + diphosphate. Functionally, catalyzes the attachment of isoleucine to tRNA(Ile). As IleRS can inadvertently accommodate and process structurally similar amino acids such as valine, to avoid such errors it has two additional distinct tRNA(Ile)-dependent editing activities. One activity is designated as 'pretransfer' editing and involves the hydrolysis of activated Val-AMP. The other activity is designated 'posttransfer' editing and involves deacylation of mischarged Val-tRNA(Ile). This Malacoplasma penetrans (strain HF-2) (Mycoplasma penetrans) protein is Isoleucine--tRNA ligase.